Here is a 244-residue protein sequence, read N- to C-terminus: Mitochondrial import inner membrane translocase subunit Tim21 (244 aa).

A mitochondrion-targeting transit peptide spans 1–18; that stretch reads MICTLLRAVRCTERLHGC. A disordered region spans residues 69-89; the sequence is VRSPQSAKEDGSKQVSVHRSQ. The chain crosses the membrane as a helical span at residues 108–128; it reads FTYLIVVLIGISITGGLFYTI.

It belongs to the TIM21 family. In terms of assembly, component of the TIM23 complex. Component of the MITRAC (mitochondrial translation regulation assembly intermediate of cytochrome c oxidase complex) complex, the core components of this complex being COA3/MITRAC12 and COX14. Interacts with COA3 and MT-CO1/COX1.

It localises to the mitochondrion membrane. In terms of biological role, participates in the translocation of transit peptide-containing proteins across the mitochondrial inner membrane. Also required for assembly of mitochondrial respiratory chain complex I and complex IV as component of the MITRAC (mitochondrial translation regulation assembly intermediate of cytochrome c oxidase complex) complex. Probably shuttles between the presequence translocase and respiratory-chain assembly intermediates in a process that promotes incorporation of early nuclear-encoded subunits into these complexes. The protein is Mitochondrial import inner membrane translocase subunit Tim21 (TIMM21) of Bos taurus (Bovine).